The primary structure comprises 229 residues: Protein GrpE (229 aa).

Disordered stretches follow at residues 1–49 (MTEG…SANS) and 207–229 (DSTA…EDGD). Residues 13–24 (TDKRRIDPDTGE) show a composition bias toward basic and acidic residues.

This sequence belongs to the GrpE family. As to quaternary structure, homodimer.

It localises to the cytoplasm. Functionally, participates actively in the response to hyperosmotic and heat shock by preventing the aggregation of stress-denatured proteins, in association with DnaK and GrpE. It is the nucleotide exchange factor for DnaK and may function as a thermosensor. Unfolded proteins bind initially to DnaJ; upon interaction with the DnaJ-bound protein, DnaK hydrolyzes its bound ATP, resulting in the formation of a stable complex. GrpE releases ADP from DnaK; ATP binding to DnaK triggers the release of the substrate protein, thus completing the reaction cycle. Several rounds of ATP-dependent interactions between DnaJ, DnaK and GrpE are required for fully efficient folding. This Mycobacterium leprae (strain TN) protein is Protein GrpE.